Reading from the N-terminus, the 438-residue chain is V-type ATP synthase beta chain (438 aa).

Belongs to the ATPase alpha/beta chains family.

In terms of biological role, produces ATP from ADP in the presence of a proton gradient across the membrane. The V-type beta chain is a regulatory subunit. This is V-type ATP synthase beta chain from Chlamydia felis (strain Fe/C-56) (Chlamydophila felis).